Consider the following 123-residue polypeptide: Small ribosomal subunit protein eS25 (123 aa).

Basic and acidic residues predominate over residues 1–13 (MPPKKDTKGDSKK). Positions 1 to 34 (MPPKKDTKGDSKKGQKAKAGSGGGKAKKKKWSKG) are disordered. The segment covering 25-34 (KAKKKKWSKG) has biased composition (basic residues).

This sequence belongs to the eukaryotic ribosomal protein eS25 family.

The protein is Small ribosomal subunit protein eS25 (RPS25) of Branchiostoma belcheri (Amphioxus).